We begin with the raw amino-acid sequence, 486 residues long: ATP-dependent rRNA helicase rrp3 (486 aa).

Residues 1-60 are disordered; sequence MSSVKRRKTDKNPSLEGLKSKKTKESKKESHTPSPEPIEDTEDNRVIEETEEAEEDDAPK. The Q motif motif lies at 60-88; that stretch reads KSFKDLGIVDSLCEACDTLGYKAPTPIQR. The 172-residue stretch at 91-262 folds into the Helicase ATP-binding domain; the sequence is IPLALQGRDL…RASLKDPLRV (172 aa). 104–111 is an ATP binding site; that stretch reads AETGSGKT. The DEAD box motif lies at 210–213; sequence DEAD. The Helicase C-terminal domain maps to 286–434; it reads HKDTYLIYLL…EYPTVKDEVM (149 aa). Basic and acidic residues-rich tracts occupy residues 447–460 and 476–486; these read ARNEMKNLHEDRGK and RGRDEMDREEG. The tract at residues 447 to 486 is disordered; sequence ARNEMKNLHEDRGKKGAVLKGRRPANGAKRGRDEMDREEG.

This sequence belongs to the DEAD box helicase family. DDX47/RRP3 subfamily. In terms of assembly, interacts with the SSU processome.

Its subcellular location is the nucleus. It carries out the reaction ATP + H2O = ADP + phosphate + H(+). Its function is as follows. ATP-dependent rRNA helicase required for pre-ribosomal RNA processing. Involved in the maturation of the 35S-pre-rRNA and to its cleavage to mature 18S rRNA. The polypeptide is ATP-dependent rRNA helicase rrp3 (Botryotinia fuckeliana (strain B05.10) (Noble rot fungus)).